A 163-amino-acid polypeptide reads, in one-letter code: Choriogonadotropin subunit beta variant 2 (163 aa).

A signal peptide spans 1-18 (MSKGLLLLLLLSMGGTWA). 6 disulfide bridges follow: Cys-27/Cys-75, Cys-41/Cys-90, Cys-44/Cys-128, Cys-52/Cys-106, Cys-56/Cys-108, and Cys-111/Cys-118. N-linked (GlcNAc...) asparagine glycosylation is found at Asn-31 and Asn-48. Positions 129 to 163 (DDPRFQASSSSKAPPPSLPSPSRLPGPSDTPILPQ) are disordered. The segment covering 141-152 (APPPSLPSPSRL) has biased composition (pro residues).

This sequence belongs to the glycoprotein hormones subunit beta family. As to expression, expressed in placenta, testis and pituitary.

Its subcellular location is the secreted. The chain is Choriogonadotropin subunit beta variant 2 (CGB2) from Homo sapiens (Human).